The primary structure comprises 602 residues: Sodium- and chloride-dependent GABA transporter 2 (602 aa).

The Cytoplasmic segment spans residues 1–40; sequence MDSRVSGTTSNGETKPVCPGLEKAAEDGALQREQWSNKME. A run of 3 helical transmembrane segments spans residues 41–61, 68–88, and 121–141; these read FLLS…FPYL, GAFF…VFLL, and IVTL…FYLF. Residues 142 to 206 lie on the Extracellular side of the membrane; it reads SSFTIDLPWG…GIQHLGALRW (65 aa). A disulfide bridge links C153 with C162. N169 and N173 each carry an N-linked (GlcNAc...) asparagine glycan. A run of 2 helical transmembrane segments spans residues 207–227 and 233–253; these read ELAL…WKGV and VVYF…IRGV. Residue N269 is glycosylated (N-linked (GlcNAc...) asparagine). 7 consecutive transmembrane segments (helical) span residues 282 to 302, 319 to 339, 366 to 386, 418 to 438, 453 to 473, 490 to 510, and 528 to 548; these read AGTQ…ALGS, FLNS…LGFM, VVML…VVLL, VLIL…LTEG, GMCL…AYGA, PLIK…TFLF, and WWGD…IPAW. Residues 549 to 602 are Cytoplasmic-facing; the sequence is SCYKLSTLKGSFRERVRQLLCPAKDLPQGHREGPSAPATPRTSLLILTELEPHH. The residue at position 587 (T587) is a Phosphothreonine. S591 is subject to Phosphoserine.

The protein belongs to the sodium:neurotransmitter symporter (SNF) (TC 2.A.22) family. SLC6A13 subfamily.

It is found in the cell membrane. The protein resides in the basolateral cell membrane. It catalyses the reaction 4-aminobutanoate(out) + chloride(out) + 2 Na(+)(out) = 4-aminobutanoate(in) + chloride(in) + 2 Na(+)(in). It carries out the reaction taurine(out) + chloride(out) + 2 Na(+)(out) = taurine(in) + chloride(in) + 2 Na(+)(in). The enzyme catalyses beta-alanine(out) + chloride(out) + 2 Na(+)(out) = beta-alanine(in) + chloride(in) + 2 Na(+)(in). The catalysed reaction is hypotaurine(out) + chloride(out) + 2 Na(+)(out) = hypotaurine(in) + chloride(in) + 2 Na(+)(in). In terms of biological role, mediates sodium- and chloride-dependent transport of gamma-aminobutyric acid (GABA). Can also mediate transport of beta-alanine, taurine and hypotaurine. The chain is Sodium- and chloride-dependent GABA transporter 2 (SLC6A13) from Bos taurus (Bovine).